The sequence spans 330 residues: D-lactate dehydrogenase (330 aa).

NAD(+) is bound by residues 155–156 (RI), Asp-175, 206–207 (MP), Asn-212, 233–235 (MAR), and Asp-259. The active site involves Arg-235. Residue Glu-264 is part of the active site. The Proton donor role is filled by His-296.

The protein belongs to the D-isomer specific 2-hydroxyacid dehydrogenase family.

The catalysed reaction is (R)-lactate + NAD(+) = pyruvate + NADH + H(+). The sequence is that of D-lactate dehydrogenase (ldhD) from Streptococcus agalactiae serotype III (strain NEM316).